A 576-amino-acid polypeptide reads, in one-letter code: N-acetylmuramoyl-L-alanine amidase (576 aa).

An N-terminal signal peptide occupies residues M1–A21. N77 carries N-linked (GlcNAc...) asparagine glycosylation. Position 239 is a phosphoserine (S239). A deamidated asparagine mark is found at N274 and N322. Residue N367 is glycosylated (N-linked (GlcNAc...) asparagine). Residues F406–G532 form the N-acetylmuramoyl-L-alanine amidase domain. Residue H410 coordinates Zn(2+). A disulfide bond links C419 and C425. A glycan (N-linked (GlcNAc...) asparagine) is linked at N485. Zn(2+)-binding residues include H522 and C530. Residues K550–Q576 are disordered.

The protein belongs to the N-acetylmuramoyl-L-alanine amidase 2 family. It depends on Zn(2+) as a cofactor. As to expression, strongly expressed in liver and fetal liver, and secreted into serum. Expressed to a much lesser extent in transverse colon, lymph nodes, heart, thymus, pancreas, descending colon, stomach and testis. Isoform 2 is not detected in the liver or serum.

It localises to the secreted. The protein resides in the membrane. The catalysed reaction is Hydrolyzes the link between N-acetylmuramoyl residues and L-amino acid residues in certain cell-wall glycopeptides.. In terms of biological role, may play a scavenger role by digesting biologically active peptidoglycan (PGN) into biologically inactive fragments. Has no direct bacteriolytic activity. In Homo sapiens (Human), this protein is N-acetylmuramoyl-L-alanine amidase (PGLYRP2).